A 1037-amino-acid chain; its full sequence is Ephrin type-A receptor 5 (1037 aa).

A signal peptide spans 1–24; the sequence is MRGSGPRGAGRRRPPSGGGDTPIT. The disordered stretch occupies residues 1–24; it reads MRGSGPRGAGRRRPPSGGGDTPIT. The Extracellular portion of the chain corresponds to 25 to 573; it reads PASLAGCYSA…AASSDQSQIP (549 aa). Residues 60-238 enclose the Eph LBD domain; it reads EVNLLDSRTV…YYKKCPSVVR (179 aa). Residues N264, N299, N369, N423, N436, and N461 are each glycosylated (N-linked (GlcNAc...) asparagine). Fibronectin type-III domains are found at residues 357-467 and 468-562; these read PPSA…TNQA and APSP…TTPV. A helical transmembrane segment spans residues 574-594; the sequence is VIAVSVTVGVILLAVVIGVLL. The Cytoplasmic portion of the chain corresponds to 595 to 1037; that stretch reads SGSCCECGCG…VQLVNGMVPL (443 aa). Phosphotyrosine; by autocatalysis occurs at positions 650 and 656. The Protein kinase domain maps to 675–936; the sequence is ITIERVIGAG…EIVNMLDKLI (262 aa). Residues 681–689 and K707 contribute to the ATP site; that span reads IGAGEFGEV. The active-site Proton acceptor is the D800. Y833 and Y982 each carry phosphotyrosine; by autocatalysis. An SAM domain is found at 965-1029; that stretch reads GAYRSVGEWL…MNSLQEMKVQ (65 aa). Residues 1035 to 1037 carry the PDZ-binding motif; it reads VPL.

The protein belongs to the protein kinase superfamily. Tyr protein kinase family. Ephrin receptor subfamily. Heterotetramer upon binding of the ligand. The heterotetramer is composed of an ephrin dimer and a receptor dimer. Oligomerization is probably required to induce biological responses. Interacts (via SAM domain) with SAMD5 (via SAM domain). Post-translationally, phosphorylated. Phosphorylation is stimulated by the ligand EFNA5. Dephosphorylation upon stimulation by glucose, inhibits EPHA5 forward signaling and results in insulin secretion. Almost exclusively expressed in the nervous system in cortical neurons, cerebellar Purkinje cells and pyramidal neurons within the cortex and hippocampus. Display an increasing gradient of expression from the forebrain to hindbrain and spinal cord.

Its subcellular location is the cell membrane. The protein localises to the cell projection. It is found in the axon. The protein resides in the dendrite. It catalyses the reaction L-tyrosyl-[protein] + ATP = O-phospho-L-tyrosyl-[protein] + ADP + H(+). Its function is as follows. Receptor tyrosine kinase which binds promiscuously GPI-anchored ephrin-A family ligands residing on adjacent cells, leading to contact-dependent bidirectional signaling into neighboring cells. The signaling pathway downstream of the receptor is referred to as forward signaling while the signaling pathway downstream of the ephrin ligand is referred to as reverse signaling. Among GPI-anchored ephrin-A ligands, EFNA5 most probably constitutes the cognate/functional ligand for EPHA5. Functions as an axon guidance molecule during development and may be involved in the development of the retinotectal, entorhino-hippocampal and hippocamposeptal pathways. Together with EFNA5 plays also a role in synaptic plasticity in adult brain through regulation of synaptogenesis. In addition to its function in the nervous system, the interaction of EPHA5 with EFNA5 mediates communication between pancreatic islet cells to regulate glucose-stimulated insulin secretion. The polypeptide is Ephrin type-A receptor 5 (EPHA5) (Homo sapiens (Human)).